Here is a 173-residue protein sequence, read N- to C-terminus: MDITIQHPWFKRALGPLIPSRLFDQFFGEGLFEYDLLPLLSSTISPYYRHSLFRSVLESGISEVRSDRDKFTIMLDVKHFSPEDLSVKIIDDFVEVHGKHNERQDDHGYISREFHRRYRLPSSVDQSAVTCVLSADGMLTFSGSKVQSNVDTIHSDRPIPVAREEKPTSAPSS.

Residue Met1 is modified to N-acetylmethionine. In terms of domain architecture, sHSP spans Leu52 to Glu164. Zn(2+)-binding residues include His100, Glu102, His107, and His154. The interval Thr152–Ser173 is disordered. A compositionally biased stretch (basic and acidic residues) spans Ile153–Pro167.

The protein belongs to the small heat shock protein (HSP20) family. In terms of assembly, heteropolymer composed of three CRYAA and one CRYAB subunits. Inter-subunit bridging via zinc ions enhances stability, which is crucial as there is no protein turn over in the lens. Can also form homodimers and homotetramers (dimers of dimers) which serve as the building blocks of homooligomers. Within homooligomers, the zinc-binding motif is created from residues of 3 different molecules. His-100 and Glu-102 from one molecule are ligands of the zinc ion, and His-107 and His-154 residues from additional molecules complete the site with tetrahedral coordination geometry.

Its subcellular location is the cytoplasm. The protein resides in the nucleus. Functionally, contributes to the transparency and refractive index of the lens. May act as a chaperone, preventing aggregation of various proteins under a wide range of stress conditions. The chain is Alpha-crystallin A chain (CRYAA) from Alligator mississippiensis (American alligator).